Consider the following 387-residue polypeptide: Early growth response protein 3 (387 aa).

Residues 241–283 (PGFGSLPQPPLTLKPIRPRKYPNRPSKTPLHERPHACPAEGCD) form a disordered region. The span at 269–283 (PLHERPHACPAEGCD) shows a compositional bias: basic and acidic residues. C2H2-type zinc fingers lie at residues 275 to 299 (HACP…LRIH), 305 to 327 (FQCR…IRTH), and 333 to 355 (FACE…AKIH). Positions 348–387 (RKRHAKIHLKQKEKKAEKGGAPSASSAPPVSLAPVVTTCA) are disordered. Residues 350 to 360 (RHAKIHLKQKE) are compositionally biased toward basic residues. Positions 368 to 387 (APSASSAPPVSLAPVVTTCA) are enriched in low complexity.

Belongs to the EGR C2H2-type zinc-finger protein family.

It localises to the nucleus. In terms of biological role, probable transcription factor involved in muscle spindle development. This Homo sapiens (Human) protein is Early growth response protein 3 (EGR3).